The primary structure comprises 442 residues: F-box/FBD/LRR-repeat protein At2g26030 (442 aa).

One can recognise an F-box domain in the interval 3-49 (CDRICELPDSLLTQVLSYLPTIDSVKTSVLSKRWEFLWLRVPVLDLK). 6 LRR repeats span residues 128–160 (CNTL…HLED), 162–187 (WYYD…VLIR), 188–214 (PIDF…RLTF), 234–260 (YLNF…DIDS), 278–309 (KRDI…DRYS), and 324–352 (QAAV…ILDF). An FBD domain is found at 358–410 (PEQDGLTYVPQCLLSSLECVEIRELIMGEETGEKLVRYFLKNSVVLKKLILRL).

This is F-box/FBD/LRR-repeat protein At2g26030 from Arabidopsis thaliana (Mouse-ear cress).